Here is a 265-residue protein sequence, read N- to C-terminus: Adenosylcobinamide-GDP ribazoletransferase (265 aa).

The next 5 membrane-spanning stretches (helical) occupy residues 59–79 (LSWILPIEISIILGMILSVLI), 113–133 (IGTFGSIGLILSLGLKYLLLV), 141–161 (WIFLFTSWFSHSASRWFALLL), 183–203 (LPPFDFALSTFFGCFPAVYFL), and 206–226 (FQNQIPNVLLGFFLSSIFVFY).

The protein belongs to the CobS family. The cofactor is Mg(2+).

The protein resides in the cell inner membrane. The catalysed reaction is alpha-ribazole + adenosylcob(III)inamide-GDP = adenosylcob(III)alamin + GMP + H(+). It catalyses the reaction alpha-ribazole 5'-phosphate + adenosylcob(III)inamide-GDP = adenosylcob(III)alamin 5'-phosphate + GMP + H(+). It functions in the pathway cofactor biosynthesis; adenosylcobalamin biosynthesis; adenosylcobalamin from cob(II)yrinate a,c-diamide: step 7/7. Joins adenosylcobinamide-GDP and alpha-ribazole to generate adenosylcobalamin (Ado-cobalamin). Also synthesizes adenosylcobalamin 5'-phosphate from adenosylcobinamide-GDP and alpha-ribazole 5'-phosphate. The sequence is that of Adenosylcobinamide-GDP ribazoletransferase from Leptospira interrogans serogroup Icterohaemorrhagiae serovar copenhageni (strain Fiocruz L1-130).